Consider the following 100-residue polypeptide: Large ribosomal subunit protein uL23 (100 aa).

Belongs to the universal ribosomal protein uL23 family. In terms of assembly, part of the 50S ribosomal subunit. Contacts protein L29, and trigger factor when it is bound to the ribosome.

In terms of biological role, one of the early assembly proteins it binds 23S rRNA. One of the proteins that surrounds the polypeptide exit tunnel on the outside of the ribosome. Forms the main docking site for trigger factor binding to the ribosome. The chain is Large ribosomal subunit protein uL23 from Salmonella paratyphi A (strain ATCC 9150 / SARB42).